Here is a 326-residue protein sequence, read N- to C-terminus: Probable cell division protein WhiA (326 aa).

Positions 275-308 (SLDELGRLADPPMTKDAIAGRIRRLLAMADKRAL) form a DNA-binding region, H-T-H motif.

Belongs to the WhiA family.

Functionally, involved in cell division and chromosome segregation. This is Probable cell division protein WhiA from Paenarthrobacter aurescens (strain TC1).